The chain runs to 288 residues: Protein sprouty homolog 3 (288 aa).

The SPR domain maps to 154–267; that stretch reads KCVPCTAVRP…PGCRCKRHTN (114 aa).

This sequence belongs to the sprouty family. In terms of assembly, interacts with TESK1. Interacts with USP11. Interacts with CAV1 (via C-terminus). As to expression, expressed in the brain with expression the highest in Purkinje cell bodies and projections in the cerebellum (at protein level). Also expressed in central and peripheral nervous system ganglion cells, superior cervical ganglion and dorsal root ganglion (at protein level). Expressed in the retinal ganglion cell layer and the inner nuclear layer (at protein level).

The protein localises to the cytoplasm. Functionally, inhibits neurite branching, arbor length and neurite complexity. Inhibits EGF-mediated p42/44 ERK signaling. Negatively regulates the MAPK cascade, resulting in a reduction of extracellular matrix protein accumulation. May function as an antagonist of fibroblast growth factor (FGF) pathways and may negatively modulate respiratory organogenesis. The sequence is that of Protein sprouty homolog 3 from Mus musculus (Mouse).